The chain runs to 792 residues: RNA-binding protein RRM4 (792 aa).

Positions 37 to 60 are disordered; it reads TDSTAQASHAAEQTIDAHQQAGDV. 3 RRM domains span residues 72–145, 154–235, and 321–398; these read PLLY…QDAS, KPRL…IDTA, and CNLF…LHEP. Residues 412–424 are compositionally biased toward low complexity; the sequence is AANADNSDMSSNS. Disordered stretches follow at residues 412–438 and 630–649; these read AANA…RQSR and DESG…APVP. A compositionally biased stretch (polar residues) spans 640 to 649; the sequence is RASSGSAPVP. The 78-residue stretch at 715–792 folds into the PABC domain; the sequence is ATDDFIDSLQ…QHKVAAGLNK (78 aa).

Belongs to the polyadenylate-binding protein type-1 family. As to quaternary structure, part of large ribonucleoprotein complexes (mRNPs) containing RNA-binding proteins RRM4 and PAB1, endosome-binding protein UPA1, core scaffold protein UPA2 and associated factor GRP1. Interacts (via PABC domain) with UPA1 (via PAM2 domain).

The protein localises to the cytoplasm. It localises to the cytoskeleton. The protein resides in the endosome. Its function is as follows. Key RNA-binding protein involved in the formation of polar-growing hyphae which is essential for infection by the plant pathogen. During filamentation, assembles into particles that shuttle bidirectionally along microtubules to both poles. The RRM4 transport particles are part of the endosomal mRNP transport that regulates polarity of the infectious hyphae by transporting distinct mRNAs encoding, for example, the ubiquitin fusion protein UBI1, the small G protein RHO3, or the septin CDC3, from the nucleus to cell poles. Recognizes a broad spectrum of cargo mRNAs and precisely binds at stop codons, which constitute landmark sites of translation, suggesting an intimate connection of mRNA transport and translation. Also binds to the specific binding motif UAUG of cargo mRNAs via its third RRM. Plus-end-directed KIN3, a kinesin-3 type motor, mediates anterograde transport of RRM4-containing mRNPs whereas split dynein DYM1-DYN2 functions in retrograde movement of mRNPs. The chain is RNA-binding protein RRM4 from Mycosarcoma maydis (Corn smut fungus).